The primary structure comprises 321 residues: Proline-rich protein 2 (321 aa).

An N-terminal signal peptide occupies residues 1-26 (MRILPKSGGGALCLLFVFALCSVAHS). 24 consecutive repeat copies span residues 168–172 (PPLNL), 173–176 (PPLT), 177–181 (FPKIK), 185–189 (PPIYK), 190–194 (PPVVI), 198–202 (PCPPK), 207–211 (PIYKP), 212–217 (PVPIYK), 218–223 (PPVPIY), 225–229 (PPVVI), 234–238 (CPPKI), 240–244 (KPIYK), 245–251 (PPVPIYK), 252–256 (PPVVI), 262–266 (PPLHK), 267–271 (PIYKH), 272–276 (PVPIY), 277–281 (KPIFK), 282–286 (PPVVV), 288–292 (PKKPC), 293–297 (PPLPK), 298–302 (FPHFP), 303–307 (PKYIP), and 315–319 (PPFPS). The segment at 168–319 (PPLNLPPLTF…KFGKWPPFPS (152 aa)) is 24 X 5 AA approximate repeats.

Belongs to the plant proline-rich protein superfamily. Mostly expressed in aerial organs, particularly in expanding leaves, stems, flowers, and siliques.

It is found in the secreted. Its subcellular location is the cell wall. The chain is Proline-rich protein 2 (PRP2) from Arabidopsis thaliana (Mouse-ear cress).